Reading from the N-terminus, the 716-residue chain is Epidermal growth factor receptor kinase substrate 8-like protein 2 (716 aa).

Disordered regions lie at residues 1-25 (MSQS…DGVA) and 182-243 (PQTL…SQEE). Residues 46–202 (MHETSQYHVQ…RQRQSILPPP (157 aa)) enclose the PID domain. Pro residues predominate over residues 199-208 (LPPPQGPAPI). The span at 234–243 (GFRRRESQEE) shows a compositional bias: basic and acidic residues. Position 240 is a phosphoserine (S240). Residue T304 is modified to Phosphothreonine. The tract at residues 449-488 (VSPVSRQSIRNSQKHSPTSEPTPPGDALPPVSSPHTHRGY) is disordered. Residue S450 is modified to Phosphoserine. A compositionally biased stretch (polar residues) spans 452–467 (VSRQSIRNSQKHSPTS). A Phosphothreonine modification is found at T470. Residues 493-552 (AMAKYVKILYDFTARNANELSVLKDEVLEVLEDGRQWWKLRSRSGQAGYVPCNILGEARP) enclose the SH3 domain. S571 carries the phosphoserine modification.

Belongs to the EPS8 family. In terms of assembly, interacts with ABI1. Part of a complex that contains SOS1, ABI1 and EPS8L2. Associates with F-actin.

Its subcellular location is the cytoplasm. The protein localises to the cell projection. It is found in the stereocilium. In terms of biological role, stimulates guanine exchange activity of SOS1. May play a role in membrane ruffling and remodeling of the actin cytoskeleton. In the cochlea, is required for stereocilia maintenance in adult hair cells. The chain is Epidermal growth factor receptor kinase substrate 8-like protein 2 (EPS8L2) from Pongo abelii (Sumatran orangutan).